The primary structure comprises 544 residues: CTP synthase (544 aa).

Residues 1 to 265 (MTKFIFVTGG…DNIITEQLQL (265 aa)) are amidoligase domain. S13 contacts CTP. S13 contributes to the UTP binding site. ATP-binding positions include 14–19 (SLGKGI) and D71. Residues D71 and E139 each coordinate Mg(2+). CTP contacts are provided by residues 146–148 (DIE), 186–191 (KTKPTQ), and K222. UTP is bound by residues 186–191 (KTKPTQ) and K222. Residues 290-544 (KIAMVGKYVD…VKAALNNKKA (255 aa)) enclose the Glutamine amidotransferase type-1 domain. Residue G353 participates in L-glutamine binding. C380 functions as the Nucleophile; for glutamine hydrolysis in the catalytic mechanism. Residues 381–384 (LGMQ), E404, and R471 each bind L-glutamine. Residues H517 and E519 contribute to the active site.

This sequence belongs to the CTP synthase family. As to quaternary structure, homotetramer.

The catalysed reaction is UTP + L-glutamine + ATP + H2O = CTP + L-glutamate + ADP + phosphate + 2 H(+). The enzyme catalyses L-glutamine + H2O = L-glutamate + NH4(+). It catalyses the reaction UTP + NH4(+) + ATP = CTP + ADP + phosphate + 2 H(+). It participates in pyrimidine metabolism; CTP biosynthesis via de novo pathway; CTP from UDP: step 2/2. With respect to regulation, allosterically activated by GTP, when glutamine is the substrate; GTP has no effect on the reaction when ammonia is the substrate. The allosteric effector GTP functions by stabilizing the protein conformation that binds the tetrahedral intermediate(s) formed during glutamine hydrolysis. Inhibited by the product CTP, via allosteric rather than competitive inhibition. Functionally, catalyzes the ATP-dependent amination of UTP to CTP with either L-glutamine or ammonia as the source of nitrogen. Regulates intracellular CTP levels through interactions with the four ribonucleotide triphosphates. The polypeptide is CTP synthase (Neisseria meningitidis serogroup C (strain 053442)).